The sequence spans 479 residues: UDP-N-acetylmuramoyl-L-alanyl-D-glutamate--2,6-diaminopimelate ligase (479 aa).

Serine 21 contacts UDP-N-acetyl-alpha-D-muramoyl-L-alanyl-D-glutamate. 98-104 (GTNGKSS) provides a ligand contact to ATP. UDP-N-acetyl-alpha-D-muramoyl-L-alanyl-D-glutamate contacts are provided by residues 144 to 145 (TT), serine 171, glutamine 177, and arginine 179. At lysine 211 the chain carries N6-carboxylysine. Meso-2,6-diaminopimelate is bound by residues arginine 372, 396-399 (DNPR), glycine 446, and glutamate 450. A Meso-diaminopimelate recognition motif motif is present at residues 396 to 399 (DNPR).

Belongs to the MurCDEF family. MurE subfamily. Mg(2+) serves as cofactor. Carboxylation is probably crucial for Mg(2+) binding and, consequently, for the gamma-phosphate positioning of ATP.

The protein localises to the cytoplasm. It carries out the reaction UDP-N-acetyl-alpha-D-muramoyl-L-alanyl-D-glutamate + meso-2,6-diaminopimelate + ATP = UDP-N-acetyl-alpha-D-muramoyl-L-alanyl-gamma-D-glutamyl-meso-2,6-diaminopimelate + ADP + phosphate + H(+). Its pathway is cell wall biogenesis; peptidoglycan biosynthesis. Functionally, catalyzes the addition of meso-diaminopimelic acid to the nucleotide precursor UDP-N-acetylmuramoyl-L-alanyl-D-glutamate (UMAG) in the biosynthesis of bacterial cell-wall peptidoglycan. This is UDP-N-acetylmuramoyl-L-alanyl-D-glutamate--2,6-diaminopimelate ligase from Rickettsia montanensis.